Consider the following 420-residue polypeptide: Serine hydroxymethyltransferase (420 aa).

(6S)-5,6,7,8-tetrahydrofolate contacts are provided by residues Leu-121 and 125 to 127 (GHL). Lys-230 is modified (N6-(pyridoxal phosphate)lysine). Residues Glu-246 and 354 to 356 (SPF) each bind (6S)-5,6,7,8-tetrahydrofolate.

This sequence belongs to the SHMT family. In terms of assembly, homodimer. The cofactor is pyridoxal 5'-phosphate.

The protein localises to the cytoplasm. It carries out the reaction (6R)-5,10-methylene-5,6,7,8-tetrahydrofolate + glycine + H2O = (6S)-5,6,7,8-tetrahydrofolate + L-serine. It participates in one-carbon metabolism; tetrahydrofolate interconversion. Its pathway is amino-acid biosynthesis; glycine biosynthesis; glycine from L-serine: step 1/1. Functionally, catalyzes the reversible interconversion of serine and glycine with tetrahydrofolate (THF) serving as the one-carbon carrier. This reaction serves as the major source of one-carbon groups required for the biosynthesis of purines, thymidylate, methionine, and other important biomolecules. Also exhibits THF-independent aldolase activity toward beta-hydroxyamino acids, producing glycine and aldehydes, via a retro-aldol mechanism. The polypeptide is Serine hydroxymethyltransferase (Rickettsia peacockii (strain Rustic)).